The chain runs to 162 residues: Scytalone dehydratase-like protein claB (162 aa).

Y48 lines the substrate pocket. Active-site residues include H83 and H108.

It belongs to the scytalone dehydratase family.

It participates in pigment biosynthesis. Scytalone dehydratase-like protein; part of the gene cluster that mediates the biosynthesis of the bianthraquinone cladofulvin, a conidial pigment not required for virulence but that plays a role in fitness and resistance to environmental stresses including UV light and low-temperature stress. The pathway begins with the synthesis of atrochrysone thioester by the polyketide synthase (PKS) claG. The atrochrysone carboxyl ACP thioesterase claF then breaks the thioester bond and releases the atrochrysone carboxylic acid from claG. This compound is decarboxylated by claH to yield emodin, which is further converted to chrysophanol hydroquinone by the reductase claC and the dehydratase claB. The cytochrome P450 monooxygenase claM then catalyzes the dimerization of nataloe-emodin to cladofulvin. The polypeptide is Scytalone dehydratase-like protein claB (Passalora fulva (Tomato leaf mold)).